The sequence spans 112 residues: Cortistatin (112 aa).

The N-terminal stretch at 1–27 (MGGCSTRGKRPSALSLLLLLLLSGIAA) is a signal peptide. Residues 28–81 (SALPLESGPTGQDSVQDATGGRRTGLLTFLAWWHEWASQDSSSTAFEGGTPELS) constitute a propeptide that is removed on maturation. The interval 66-101 (QDSSSTAFEGGTPELSKRQERPPLQQPPHRDKKPCK) is disordered. Cys100 and Cys111 are disulfide-bonded.

This sequence belongs to the somatostatin family. Interneurons in the cerebral cortex and hippocampus.

It is found in the secreted. Its function is as follows. Neuropeptide with neuronal depressant and sleep-modulating properties. The protein is Cortistatin (Cort) of Rattus norvegicus (Rat).